A 192-amino-acid polypeptide reads, in one-letter code: Transcription termination/antitermination protein NusG (192 aa).

Belongs to the NusG family.

In terms of biological role, participates in transcription elongation, termination and antitermination. The polypeptide is Transcription termination/antitermination protein NusG (Rickettsia prowazekii (strain Madrid E)).